Reading from the N-terminus, the 545-residue chain is CTP synthase (545 aa).

Residues M1–L266 are amidoligase domain. A CTP-binding site is contributed by S14. Residue S14 participates in UTP binding. Residues S15–I20 and D72 each bind ATP. Positions 72 and 140 each coordinate Mg(2+). CTP is bound by residues D147–E149, K187–Q192, and K223. UTP contacts are provided by residues K187–Q192 and K223. K239 to V241 is a binding site for ATP. The Glutamine amidotransferase type-1 domain maps to T291–R542. G352 lines the L-glutamine pocket. C379 functions as the Nucleophile; for glutamine hydrolysis in the catalytic mechanism. L-glutamine is bound by residues L380–Q383, E403, and R470. Residues H515 and E517 contribute to the active site.

This sequence belongs to the CTP synthase family. In terms of assembly, homotetramer.

The catalysed reaction is UTP + L-glutamine + ATP + H2O = CTP + L-glutamate + ADP + phosphate + 2 H(+). It carries out the reaction L-glutamine + H2O = L-glutamate + NH4(+). The enzyme catalyses UTP + NH4(+) + ATP = CTP + ADP + phosphate + 2 H(+). It participates in pyrimidine metabolism; CTP biosynthesis via de novo pathway; CTP from UDP: step 2/2. Allosterically activated by GTP, when glutamine is the substrate; GTP has no effect on the reaction when ammonia is the substrate. The allosteric effector GTP functions by stabilizing the protein conformation that binds the tetrahedral intermediate(s) formed during glutamine hydrolysis. Inhibited by the product CTP, via allosteric rather than competitive inhibition. Catalyzes the ATP-dependent amination of UTP to CTP with either L-glutamine or ammonia as the source of nitrogen. Regulates intracellular CTP levels through interactions with the four ribonucleotide triphosphates. The chain is CTP synthase from Shewanella loihica (strain ATCC BAA-1088 / PV-4).